A 269-amino-acid polypeptide reads, in one-letter code: Histone doublet H2B-H2A (269 aa).

Residues 1 to 168 (MATQKETTRK…LAGNAARDSK (168 aa)) are histone fold. The interval 210 to 249 (RKKARKTTEKEASSPKKKAAPKKKKAASKQKKSLSDKELA) is disordered. Over residues 224–241 (PKKKAAPKKKKAASKQKK) the composition is skewed to basic residues.

The protein resides in the host nucleus. It localises to the host cytoplasm. It is found in the virion. Histone-like protein that is recruited to viral factories during viral replication and participates in viral DNA packaging and virion production probably by forming unstable nucleosome-like particles. May compact the viral DNA. This Melbournevirus (MelV) protein is Histone doublet H2B-H2A.